The sequence spans 130 residues: Phosphoribosyl-AMP cyclohydrolase (130 aa).

Position 77 (Asp77) interacts with Mg(2+). Zn(2+) is bound at residue Cys78. Asp79 and Asp81 together coordinate Mg(2+). Zn(2+) contacts are provided by Cys95 and Cys102.

Belongs to the PRA-CH family. In terms of assembly, homodimer. Mg(2+) is required as a cofactor. Zn(2+) serves as cofactor.

It localises to the cytoplasm. It carries out the reaction 1-(5-phospho-beta-D-ribosyl)-5'-AMP + H2O = 1-(5-phospho-beta-D-ribosyl)-5-[(5-phospho-beta-D-ribosylamino)methylideneamino]imidazole-4-carboxamide. It functions in the pathway amino-acid biosynthesis; L-histidine biosynthesis; L-histidine from 5-phospho-alpha-D-ribose 1-diphosphate: step 3/9. Functionally, catalyzes the hydrolysis of the adenine ring of phosphoribosyl-AMP. The sequence is that of Phosphoribosyl-AMP cyclohydrolase from Pseudomonas entomophila (strain L48).